Here is a 937-residue protein sequence, read N- to C-terminus: Isoleucine--tRNA ligase (937 aa).

The short motif at 58 to 68 is the 'HIGH' region element; it reads PYANGTLHLGH. Glu-561 contacts L-isoleucyl-5'-AMP. A 'KMSKS' region motif is present at residues 602-606; the sequence is KMSKS. ATP is bound at residue Lys-605. Positions 900, 903, 920, and 923 each coordinate Zn(2+).

The protein belongs to the class-I aminoacyl-tRNA synthetase family. IleS type 1 subfamily. Monomer. It depends on Zn(2+) as a cofactor.

Its subcellular location is the cytoplasm. The catalysed reaction is tRNA(Ile) + L-isoleucine + ATP = L-isoleucyl-tRNA(Ile) + AMP + diphosphate. Functionally, catalyzes the attachment of isoleucine to tRNA(Ile). As IleRS can inadvertently accommodate and process structurally similar amino acids such as valine, to avoid such errors it has two additional distinct tRNA(Ile)-dependent editing activities. One activity is designated as 'pretransfer' editing and involves the hydrolysis of activated Val-AMP. The other activity is designated 'posttransfer' editing and involves deacylation of mischarged Val-tRNA(Ile). In Histophilus somni (strain 2336) (Haemophilus somnus), this protein is Isoleucine--tRNA ligase.